We begin with the raw amino-acid sequence, 64 residues long: MAKYLYLDQDECMACESCVELCPEAFRMSSAGEYAEVIDPNTTAECVEDAISTCPVECIEWREE.

2 4Fe-4S ferredoxin-type domains span residues 3–31 (KYLY…MSSA) and 34–64 (YAEV…WREE). 4 residues coordinate [4Fe-4S] cluster: Cys12, Cys15, Cys18, and Cys54.

As to quaternary structure, homodimer. [4Fe-4S] cluster serves as cofactor.

Its function is as follows. Ferredoxins are iron-sulfur proteins that transfer electrons in a wide variety of metabolic reactions. The chain is Ferredoxin-2 from Nitratidesulfovibrio vulgaris (strain DSM 19637 / Miyazaki F) (Desulfovibrio vulgaris).